Here is a 758-residue protein sequence, read N- to C-terminus: Relaxin receptor 1 (758 aa).

Residues 1 to 409 (MTSGPFFFCI…ENLLASIIQR (409 aa)) lie on the Extracellular side of the membrane. One can recognise an LDL-receptor class A domain in the interval 26–63 (SCPLGSFPCGNMSRCLPQLLHCNGVDDCGNRADEDHCG). 3 cysteine pairs are disulfide-bonded: Cys27/Cys40, Cys34/Cys53, and Cys47/Cys62. Asn36 carries an N-linked (GlcNAc...) asparagine glycan. Residues Leu45, Asn48, Val50, Asp52, Asp58, and Glu59 each coordinate Ca(2+). An N-linked (GlcNAc...) asparagine glycan is attached at Asn127. 10 LRR repeats span residues 127–148 (NVTV…GFRK), 151–172 (ELQK…AFRG), 175–196 (SLTK…VFED), 199–220 (RLEW…TFYG), 223–244 (SLIL…PLCQ), 248–269 (RLHW…TFIS), 272–293 (NLTV…AFTH), 296–317 (KLDE…IFKD), 320–341 (ELSQ…QFDC), and 344–365 (KLKS…MFRP). N-linked (GlcNAc...) asparagine glycosylation is found at Asn264 and Asn272. Asn325 is a glycosylation site (N-linked (GlcNAc...) asparagine). An N-linked (GlcNAc...) asparagine glycan is attached at Asn368. A helical membrane pass occupies residues 410–430 (VFVWVVSAITCFGNIFVICMR). The Cytoplasmic segment spans residues 431–443 (PYIRSENKLHAMS). A helical transmembrane segment spans residues 444–464 (IISLCCADCLMGVYLFVIGAF). Residues 465–486 (DLKFRGEYNKHAQPWMESVHCQ) lie on the Extracellular side of the membrane. Cys485 and Cys563 are oxidised to a cystine. The helical transmembrane segment at 487 to 507 (FMGSLAILSTEVSVLLLTFLT) threads the bilayer. Over 508–527 (LEKYICIVYPFRCLRPRKCR) the chain is Cytoplasmic. The helical transmembrane segment at 528–548 (TITVLIFIWIIGFIVAFAPLG) threads the bilayer. Residues 549–577 (NKEFFKNYYGTNGVCFPLHSEDTGSTGAQ) lie on the Extracellular side of the membrane. Residues 578–598 (IYSVVIFLGINLVAFIIIVFS) traverse the membrane as a helical segment. At 599-629 (YGSMFYSVHQSSVTVTEIQKQVKKEVVLAKR) the chain is on the cytoplasmic side. A helical transmembrane segment spans residues 630 to 650 (FFFIVFTDALCWIPIFILKFL). Ser651 is a topological domain (extracellular). Residues 652-672 (LLQVEIPDSITSWVVIFILPI) traverse the membrane as a helical segment. The Cytoplasmic segment spans residues 673 to 758 (NSALNPIIYT…SQSSRLNSYS (86 aa)).

This sequence belongs to the G-protein coupled receptor 1 family. In terms of assembly, interacts with C1QTNF8.

It is found in the cell membrane. Functionally, receptor for relaxins. The activity of this receptor is mediated by G proteins leading to stimulation of adenylate cyclase and an increase of cAMP. Binding of the ligand may also activate a tyrosine kinase pathway that inhibits the activity of a phosphodiesterase that degrades cAMP. This is Relaxin receptor 1 (Rxfp1) from Mus musculus (Mouse).